Reading from the N-terminus, the 1486-residue chain is Chromosome partition protein MukB (1486 aa).

An ATP-binding site is contributed by 34-41 (GGNGAGKS). 3 coiled-coil regions span residues 326 to 418 (LEAD…QYNQ), 444 to 480 (LETFQAKELEATEKMLSLEQKMSMAQTAHSQFEQAYQ), and 509 to 603 (RHLA…RAPV). The interval 666-783 (PGGSEDQRLN…EVPLFGRAAR (118 aa)) is flexible hinge. 3 coiled-coil regions span residues 835 to 923 (EAEI…AKLE), 977 to 1115 (EMLS…TAKA), and 1209 to 1266 (VEAI…QNVS).

This sequence belongs to the SMC family. MukB subfamily. In terms of assembly, homodimerization via its hinge domain. Binds to DNA via its C-terminal region. Interacts, and probably forms a ternary complex, with MukE and MukF via its C-terminal region. The complex formation is stimulated by calcium or magnesium. Interacts with tubulin-related protein FtsZ.

The protein localises to the cytoplasm. It localises to the nucleoid. In terms of biological role, plays a central role in chromosome condensation, segregation and cell cycle progression. Functions as a homodimer, which is essential for chromosome partition. Involved in negative DNA supercoiling in vivo, and by this means organize and compact chromosomes. May achieve or facilitate chromosome segregation by condensation DNA from both sides of a centrally located replisome during cell division. This is Chromosome partition protein MukB from Escherichia coli O81 (strain ED1a).